A 328-amino-acid chain; its full sequence is MIEKIWSGESPLWRLLLPLSWLYGLVSGAIRLCYKLKLKRAWRAPVPVVVVGNLTAGGNGKTPVVVWLVEQLQQRGIRVGVVSRGYGGKAESYPLLLSADTTTAQAGDEPVLIYQRTGAPVAVSPVRSDAVKAILAQHPDVQIIVTDDGLQHYRLARDVEIVVVDGVRRFGNGWWLPAGPMRERAGRLKSVDAVIVNGGVPRSGEIPMHLLPGQAVNLRTGMRCDVAQLEHVVAMAGIGHPPRFFATLKMCGVQPEKCVPLADHQSLNHADVSALVSAGQTLVMTEKDAVKCRAFAEENWWYLPVDAQLSGDEPAKLLAQLTSLASGN.

Position 55 to 62 (55 to 62 (TAGGNGKT)) interacts with ATP.

Belongs to the LpxK family.

It carries out the reaction a lipid A disaccharide + ATP = a lipid IVA + ADP + H(+). It participates in glycolipid biosynthesis; lipid IV(A) biosynthesis; lipid IV(A) from (3R)-3-hydroxytetradecanoyl-[acyl-carrier-protein] and UDP-N-acetyl-alpha-D-glucosamine: step 6/6. Transfers the gamma-phosphate of ATP to the 4'-position of a tetraacyldisaccharide 1-phosphate intermediate (termed DS-1-P) to form tetraacyldisaccharide 1,4'-bis-phosphate (lipid IVA). In Escherichia coli O17:K52:H18 (strain UMN026 / ExPEC), this protein is Tetraacyldisaccharide 4'-kinase.